The primary structure comprises 354 residues: 3'-5' exonuclease (354 aa).

Residues 1–120 (MERFLTKMPI…PSPEKEKPEK (120 aa)) are disordered. 2 stretches are compositionally biased toward basic and acidic residues: residues 13-30 (KANE…ETPK) and 37-50 (KKDT…KENA). A compositionally biased stretch (basic residues) spans 59–70 (TKGRPGRPAAKR). The span at 71 to 91 (KNLDTPDVKDEKIAMEEENPP) shows a compositional bias: basic and acidic residues. Serine 104, serine 110, and serine 112 each carry phosphoserine. A 3'-5' exonuclease domain is found at 149–314 (WVEKQKDDVV…GQVIYRELER (166 aa)). Positions 163, 165, and 301 each coordinate Mg(2+).

It belongs to the WRNexo family.

The protein resides in the nucleus. Has exonuclease activity on both single-stranded and duplex templates bearing overhangs, but not blunt ended duplex DNA, and cleaves in a 3'-5' direction. Essential for the formation of DNA replication focal centers. Has an important role in maintaining genome stability. The chain is 3'-5' exonuclease from Drosophila simulans (Fruit fly).